Here is a 436-residue protein sequence, read N- to C-terminus: Trigger factor (436 aa).

A PPIase FKBP-type domain is found at 161 to 246; it reads DDQLNIDFVG…VNSVSEPKLP (86 aa).

The protein belongs to the FKBP-type PPIase family. Tig subfamily.

It localises to the cytoplasm. The enzyme catalyses [protein]-peptidylproline (omega=180) = [protein]-peptidylproline (omega=0). Functionally, involved in protein export. Acts as a chaperone by maintaining the newly synthesized protein in an open conformation. Functions as a peptidyl-prolyl cis-trans isomerase. This is Trigger factor from Pseudomonas fluorescens (strain ATCC BAA-477 / NRRL B-23932 / Pf-5).